Here is a 422-residue protein sequence, read N- to C-terminus: 4-hydroxy-3-methylbut-2-en-1-yl diphosphate synthase (flavodoxin) (422 aa).

Positions 316, 319, 362, and 369 each coordinate [4Fe-4S] cluster.

Belongs to the IspG family. [4Fe-4S] cluster is required as a cofactor.

It catalyses the reaction (2E)-4-hydroxy-3-methylbut-2-enyl diphosphate + oxidized [flavodoxin] + H2O + 2 H(+) = 2-C-methyl-D-erythritol 2,4-cyclic diphosphate + reduced [flavodoxin]. It functions in the pathway isoprenoid biosynthesis; isopentenyl diphosphate biosynthesis via DXP pathway; isopentenyl diphosphate from 1-deoxy-D-xylulose 5-phosphate: step 5/6. Functionally, converts 2C-methyl-D-erythritol 2,4-cyclodiphosphate (ME-2,4cPP) into 1-hydroxy-2-methyl-2-(E)-butenyl 4-diphosphate. This chain is 4-hydroxy-3-methylbut-2-en-1-yl diphosphate synthase (flavodoxin), found in Ehrlichia ruminantium (strain Gardel).